Reading from the N-terminus, the 113-residue chain is Hydrogenase maturation factor HypA (113 aa).

Residue His2 participates in Ni(2+) binding. Zn(2+)-binding residues include Cys73, Cys76, Cys89, and Cys92.

The protein belongs to the HypA/HybF family.

Involved in the maturation of [NiFe] hydrogenases. Required for nickel insertion into the metal center of the hydrogenase. The protein is Hydrogenase maturation factor HypA of Prosthecochloris aestuarii (strain DSM 271 / SK 413).